Here is a 355-residue protein sequence, read N- to C-terminus: Protein RecA (355 aa).

67 to 74 serves as a coordination point for ATP; it reads GPESSGKT. A disordered region spans residues 335–355; it reads NSLVSDVESEDEGASESNEEF. Residues 341–355 show a composition bias toward acidic residues; that stretch reads VESEDEGASESNEEF.

Belongs to the RecA family.

The protein resides in the cytoplasm. In terms of biological role, can catalyze the hydrolysis of ATP in the presence of single-stranded DNA, the ATP-dependent uptake of single-stranded DNA by duplex DNA, and the ATP-dependent hybridization of homologous single-stranded DNAs. It interacts with LexA causing its activation and leading to its autocatalytic cleavage. This Sodalis glossinidius protein is Protein RecA.